A 423-amino-acid polypeptide reads, in one-letter code: Histidine--tRNA ligase (423 aa).

It belongs to the class-II aminoacyl-tRNA synthetase family. In terms of assembly, homodimer.

The protein localises to the cytoplasm. The catalysed reaction is tRNA(His) + L-histidine + ATP = L-histidyl-tRNA(His) + AMP + diphosphate + H(+). The protein is Histidine--tRNA ligase of Rhodococcus erythropolis (strain PR4 / NBRC 100887).